A 141-amino-acid chain; its full sequence is MLRTMLKSKIHRATVTQADLHYVGSVTVDQDLLDAADLLPGEQVAIVDINNGSRLETYVIPGKRGSGVIGINGAAAHLVHTGDLVILIAYGQMDDAEARAYQPRVVHVDSANQVIDLNADTSTAAAGTAGAPVPNPLADPA.

Ser25 (schiff-base intermediate with substrate; via pyruvic acid) is an active-site residue. Ser25 is modified (pyruvic acid (Ser)). Position 57 (Thr57) interacts with substrate. Catalysis depends on Tyr58, which acts as the Proton donor. Gly73–Ala75 contributes to the substrate binding site.

It belongs to the PanD family. In terms of assembly, heterooctamer of four alpha and four beta subunits. It depends on pyruvate as a cofactor. In terms of processing, is synthesized initially as an inactive proenzyme, which is activated by self-cleavage at a specific serine bond to produce a beta-subunit with a hydroxyl group at its C-terminus and an alpha-subunit with a pyruvoyl group at its N-terminus.

The protein resides in the cytoplasm. It carries out the reaction L-aspartate + H(+) = beta-alanine + CO2. The protein operates within cofactor biosynthesis; (R)-pantothenate biosynthesis; beta-alanine from L-aspartate: step 1/1. Functionally, catalyzes the pyruvoyl-dependent decarboxylation of aspartate to produce beta-alanine. The protein is Aspartate 1-decarboxylase of Salinispora arenicola (strain CNS-205).